Here is a 517-residue protein sequence, read N- to C-terminus: Ribosome assembly protein 4 (517 aa).

The disordered stretch occupies residues 1–25 (MATLAPPPSKRQRREEIQRTQTQQD). The tract at residues 34–128 (LGSFKANFID…TITLSAEPQA (95 aa)) is ubiquitin-like (UBL) domain. WD repeat units follow at residues 144 to 184 (GHGQ…PKFT), 187 to 226 (GHTGWVLGVSWSPDGKYLATCSMDTTVRVWDPESGKQVNQ), 230 to 277 (GHAK…HVLS), 278 to 316 (GHKGSVSCVKWGGTDLIYTGSHDRSVRVWDAVKGTLVHN), 351 to 397 (EERR…SKPV), 402 to 441 (GHQNKVNHVQFSPDGTLIASAGWDNSTKLWNARDGKFIKN), 444 to 483 (GHVAPVYQCAWSADSRLVVTGSKDCTLKVWNVRTGKLAMD), and 486 to 517 (GHEDEVYAVDWAADGELVASGGKDKAVRTWRN).

It belongs to the NLE1/RSA4 family. In terms of assembly, associates with the pre-60S ribosomal particle. Interacts (via WD repeats) with uL18. Interacts (via UBL domain) with MDN1 (via VWFA/MIDAS domain). Interacts (via WD repeats) with NSA2.

The protein localises to the nucleus. It is found in the nucleolus. Its function is as follows. Involved in ribosome biogenesis. Required for processing and efficient intra-nuclear transport of pre-60S ribosomal subunits. Interacts with the AAA-ATPase Midasin, which is essential for the ATP-dependent dissociation of a group of nonribosomal factors from the pre-60S particle. The protein is Ribosome assembly protein 4 of Chaetomium thermophilum (strain DSM 1495 / CBS 144.50 / IMI 039719) (Thermochaetoides thermophila).